The chain runs to 304 residues: Peroxisomal membrane protein 13 (304 aa).

Disordered stretches follow at residues 1–78 (MASQ…WEQQ) and 258–304 (PRKM…VWGN). 2 stretches are compositionally biased toward polar residues: residues 19 to 44 (NTSG…SGTA) and 56 to 67 (RPNTAANMNSLS). A compositionally biased stretch (low complexity) spans 262-279 (QQPPQGPNGLPLPHQPHG).

It belongs to the peroxin-13 family. In terms of assembly, interacts with PEX14; forming the PEX13-PEX14 docking complex. Interacts (via N-terminus) with PEX7, but not with PEX5. Interacts with APEM9 (via N-terminus). In terms of tissue distribution, highly expressed in pollen. Detected in shoots, roots, stems, leaves, inflorescences and emasculated postils. Strongly expressed in both male and female gametophytes during fertilization.

The protein localises to the peroxisome membrane. Component of the PEX13-PEX14 docking complex, a translocon channel that specifically mediates the import of peroxisomal cargo proteins bound to PEX5 receptor. The PEX13-PEX14 docking complex forms a large import pore which can be opened to a diameter of about 9 nm. Mechanistically, PEX5 receptor along with cargo proteins associates with the PEX14 subunit of the PEX13-PEX14 docking complex in the cytosol, leading to the insertion of the receptor into the organelle membrane with the concomitant translocation of the cargo into the peroxisome matrix. Essential for pollen-tube discharge that take place only in the presence of functional peroxisomes in either the male or the female gametophyte. This chain is Peroxisomal membrane protein 13, found in Arabidopsis thaliana (Mouse-ear cress).